Consider the following 211-residue polypeptide: Ribonuclease HII (211 aa).

The RNase H type-2 domain occupies 16–205 (APVCGVDEAG…VKAALAAAAV (190 aa)). Positions 22, 23, and 114 each coordinate a divalent metal cation.

It belongs to the RNase HII family. It depends on Mn(2+) as a cofactor. Mg(2+) is required as a cofactor.

It is found in the cytoplasm. The catalysed reaction is Endonucleolytic cleavage to 5'-phosphomonoester.. In terms of biological role, endonuclease that specifically degrades the RNA of RNA-DNA hybrids. The polypeptide is Ribonuclease HII (rnhB) (Caulobacter vibrioides (strain ATCC 19089 / CIP 103742 / CB 15) (Caulobacter crescentus)).